Here is a 700-residue protein sequence, read N- to C-terminus: Long chain acyl-CoA synthetase 7, peroxisomal (700 aa).

The interval 1–29 (MEFASPEQRRLETIRSHIDTSPTNDQSSS) is disordered. Residues 7 to 18 (EQRRLETIRSHI) are compositionally biased toward basic and acidic residues. Residues 10–18 (RLETIRSHI) carry the Microbody targeting signal motif. Residues 19 to 29 (DTSPTNDQSSS) show a composition bias toward polar residues. 266-277 (ICYTSGTTGTPK) lines the ATP pocket. The fatty acid-binding stretch occupies residues 526–550 (DGWLHTGDIGLWLPGGRLKIIDRKK). The Microbody targeting signal motif lies at 698-700 (SKL).

This sequence belongs to the ATP-dependent AMP-binding enzyme family. Interacts with PEX5. It depends on Mg(2+) as a cofactor. Expressed in roots, stems, leaves flowers and germinating seedling. Preferentially expressed in seeds.

The protein localises to the peroxisome. It catalyses the reaction a long-chain fatty acid + ATP + CoA = a long-chain fatty acyl-CoA + AMP + diphosphate. The enzyme catalyses decanoate + ATP + CoA = decanoyl-CoA + AMP + diphosphate. It carries out the reaction dodecanoate + ATP + CoA = dodecanoyl-CoA + AMP + diphosphate. The catalysed reaction is tetradecanoate + ATP + CoA = tetradecanoyl-CoA + AMP + diphosphate. It catalyses the reaction hexadecanoate + ATP + CoA = hexadecanoyl-CoA + AMP + diphosphate. The enzyme catalyses (9Z)-octadecenoate + ATP + CoA = (9Z)-octadecenoyl-CoA + AMP + diphosphate. It carries out the reaction (9Z,12Z)-octadecadienoate + ATP + CoA = (9Z,12Z)-octadecadienoyl-CoA + AMP + diphosphate. The catalysed reaction is (9Z,12Z,15Z)-octadecatrienoate + ATP + CoA = (9Z,12Z,15Z)-octadecatrienoyl-CoA + AMP + diphosphate. It functions in the pathway lipid metabolism; fatty acid metabolism. In terms of biological role, activation of long-chain fatty acids for both synthesis of cellular lipids, and degradation via beta-oxidation. Preferentially uses palmitate, palmitoleate, oleate, linoleate and eicosenoate as substrates. Can use myristate and linolenate as substrates. Functions redundantly with LACS6 in lipid mobilization for beta-oxidation during seed germination, which is essential for postgerminative growth and seedling establishment. The protein is Long chain acyl-CoA synthetase 7, peroxisomal of Arabidopsis thaliana (Mouse-ear cress).